The sequence spans 197 residues: Holliday junction branch migration complex subunit RuvA (197 aa).

Residues 1 to 63 (MYAYLKGIIT…EDAHLLYGFR (63 aa)) form a domain I region. The domain II stretch occupies residues 64–142 (SEDEKKLFLS…VAGDDLPAKV (79 aa)). Residues 143-147 (AVQAS) are flexible linker. Positions 148-197 (AENQELEEAMEAMLALGYKATELKKIKKFFEGTTDTAENYIKSALKMLVK) are domain III.

The protein belongs to the RuvA family. Homotetramer. Forms an RuvA(8)-RuvB(12)-Holliday junction (HJ) complex. HJ DNA is sandwiched between 2 RuvA tetramers; dsDNA enters through RuvA and exits via RuvB. An RuvB hexamer assembles on each DNA strand where it exits the tetramer. Each RuvB hexamer is contacted by two RuvA subunits (via domain III) on 2 adjacent RuvB subunits; this complex drives branch migration. In the full resolvosome a probable DNA-RuvA(4)-RuvB(12)-RuvC(2) complex forms which resolves the HJ.

It is found in the cytoplasm. Its function is as follows. The RuvA-RuvB-RuvC complex processes Holliday junction (HJ) DNA during genetic recombination and DNA repair, while the RuvA-RuvB complex plays an important role in the rescue of blocked DNA replication forks via replication fork reversal (RFR). RuvA specifically binds to HJ cruciform DNA, conferring on it an open structure. The RuvB hexamer acts as an ATP-dependent pump, pulling dsDNA into and through the RuvAB complex. HJ branch migration allows RuvC to scan DNA until it finds its consensus sequence, where it cleaves and resolves the cruciform DNA. The chain is Holliday junction branch migration complex subunit RuvA from Streptococcus pneumoniae (strain Hungary19A-6).